Reading from the N-terminus, the 208-residue chain is Probable GTP-binding protein EngB (208 aa).

The EngB-type G domain maps to 23-205; sequence LTSEMVILGR…RQTLLKYLLT (183 aa). GTP contacts are provided by residues 31–38, 57–61, 84–87, 154–157, and 182–184; these read GRSNVGKS, GKTRL, DLPG, TKFD, and FNA. Mg(2+) contacts are provided by serine 38 and threonine 59.

This sequence belongs to the TRAFAC class TrmE-Era-EngA-EngB-Septin-like GTPase superfamily. EngB GTPase family. It depends on Mg(2+) as a cofactor.

Functionally, necessary for normal cell division and for the maintenance of normal septation. The protein is Probable GTP-binding protein EngB of Helicobacter pylori (strain Shi470).